Reading from the N-terminus, the 622-residue chain is Threonine--tRNA ligase (622 aa).

The interval 1-134 (MKTLLIHSDY…GHPLSELSRK (134 aa)) is editing domain. A catalytic region spans residues 199–498 (PHVKYIKEKE…TLEDKPPALP (300 aa)). Zn(2+) is bound by residues cysteine 291, histidine 343, and histidine 467.

The protein belongs to the class-II aminoacyl-tRNA synthetase family. Homodimer. It depends on Zn(2+) as a cofactor.

It is found in the cytoplasm. The catalysed reaction is tRNA(Thr) + L-threonine + ATP = L-threonyl-tRNA(Thr) + AMP + diphosphate + H(+). Catalyzes the attachment of threonine to tRNA(Thr) in a two-step reaction: L-threonine is first activated by ATP to form Thr-AMP and then transferred to the acceptor end of tRNA(Thr). Also edits incorrectly charged L-seryl-tRNA(Thr). The sequence is that of Threonine--tRNA ligase from Methanococcus vannielii (strain ATCC 35089 / DSM 1224 / JCM 13029 / OCM 148 / SB).